A 155-amino-acid chain; its full sequence is MSQVILDLQLACEDNSGLPEESQFQTWLNAVIPQFQEESEVTIRVVDSAESHCLNLTYRGKDKPTNVLSFPFEVPPGMEMSLLGDLVICRQVVEKEAQEQGKPLEAHWAHMVVHGSLHLLGYDHIEDDEAEEMEALETEIMLALGYEDPYIAEKE.

Zn(2+) is bound by residues His114, His118, and His124.

The protein belongs to the endoribonuclease YbeY family. Zn(2+) is required as a cofactor.

Its subcellular location is the cytoplasm. Functionally, single strand-specific metallo-endoribonuclease involved in late-stage 70S ribosome quality control and in maturation of the 3' terminus of the 16S rRNA. In Escherichia coli O7:K1 (strain IAI39 / ExPEC), this protein is Endoribonuclease YbeY.